Here is a 138-residue protein sequence, read N- to C-terminus: Phosphoribosyl-AMP cyclohydrolase (138 aa).

Asp84 contributes to the Mg(2+) binding site. Cys85 lines the Zn(2+) pocket. The Mg(2+) site is built by Asp86 and Asp88. Residues Cys102 and Cys109 each coordinate Zn(2+).

The protein belongs to the PRA-CH family. In terms of assembly, homodimer. It depends on Mg(2+) as a cofactor. The cofactor is Zn(2+).

It localises to the cytoplasm. It catalyses the reaction 1-(5-phospho-beta-D-ribosyl)-5'-AMP + H2O = 1-(5-phospho-beta-D-ribosyl)-5-[(5-phospho-beta-D-ribosylamino)methylideneamino]imidazole-4-carboxamide. The protein operates within amino-acid biosynthesis; L-histidine biosynthesis; L-histidine from 5-phospho-alpha-D-ribose 1-diphosphate: step 3/9. Catalyzes the hydrolysis of the adenine ring of phosphoribosyl-AMP. The sequence is that of Phosphoribosyl-AMP cyclohydrolase from Burkholderia ambifaria (strain ATCC BAA-244 / DSM 16087 / CCUG 44356 / LMG 19182 / AMMD) (Burkholderia cepacia (strain AMMD)).